Reading from the N-terminus, the 305-residue chain is ATP synthase F(0) complex subunit B2, mitochondrial (305 aa).

The transit peptide at 1 to 22 (MSLSRCLPLGQNARVIIIPARL) directs the protein to the mitochondrion.

The protein belongs to the eukaryotic ATPase B chain family. Subunit of the F-type ATPase which has 2 components, CF(1) - the catalytic core - and CF(0) - the membrane proton channel.

Its subcellular location is the mitochondrion. It localises to the mitochondrion inner membrane. In terms of biological role, mitochondrial membrane ATP synthase (F(1)F(0) ATP synthase or Complex V) produces ATP from ADP in the presence of a proton gradient across the membrane which is generated by electron transport complexes of the respiratory chain. F-type ATPases consist of two structural domains, F(1) - containing the extramembraneous catalytic core, and F(0) - containing the membrane proton channel, linked together by a central stalk and a peripheral stalk. During catalysis, ATP synthesis in the catalytic domain of F(1) is coupled via a rotary mechanism of the central stalk subunits to proton translocation. Part of the complex F(0) domain and the peripheric stalk, which acts as a stator to hold the subunits of the catalytic subcomplexes relative to the rotary elements. Plays a role in somatic development. Does not play a role in germline development. In Caenorhabditis elegans, this protein is ATP synthase F(0) complex subunit B2, mitochondrial.